Consider the following 422-residue polypeptide: Serine--tRNA ligase (422 aa).

227–229 (TSE) provides a ligand contact to L-serine. Residues 258–260 (RRE) and V274 contribute to the ATP site. An L-serine-binding site is contributed by E281. Residue 345–348 (ELTS) participates in ATP binding. T380 provides a ligand contact to L-serine.

It belongs to the class-II aminoacyl-tRNA synthetase family. Type-1 seryl-tRNA synthetase subfamily. As to quaternary structure, homodimer. The tRNA molecule binds across the dimer.

Its subcellular location is the cytoplasm. It carries out the reaction tRNA(Ser) + L-serine + ATP = L-seryl-tRNA(Ser) + AMP + diphosphate + H(+). The catalysed reaction is tRNA(Sec) + L-serine + ATP = L-seryl-tRNA(Sec) + AMP + diphosphate + H(+). Its pathway is aminoacyl-tRNA biosynthesis; selenocysteinyl-tRNA(Sec) biosynthesis; L-seryl-tRNA(Sec) from L-serine and tRNA(Sec): step 1/1. In terms of biological role, catalyzes the attachment of serine to tRNA(Ser). Is also able to aminoacylate tRNA(Sec) with serine, to form the misacylated tRNA L-seryl-tRNA(Sec), which will be further converted into selenocysteinyl-tRNA(Sec). This Thermobifida fusca (strain YX) protein is Serine--tRNA ligase.